The primary structure comprises 433 residues: MQRFTGLVTATTLATYLLVVLGVATELTGGVSPAAVAHYVTAGAVWLLLVAAAALAWRDSRLPRVKWGVTAAAVAYPAQAAVGMAVLASGGPGQLHLFGGVGVFALLLITLTWHLDREVEPRERAAATAFNREGDGDDSVLLYRLPDGLRRYVELTKPRLMWLLCLLALSGMALATVTGAALDGVTIAATLFGGVLAVGAAGTFNHVYERDRDRRMNRTADRPVATDAVGVGRATAFGVGLLVVSMAVLVWLVNPLAAALTAVAVVYYAVVYTVVLKPTTTWNTVIGGGAGALPAVIGWAAVAGSIGLPALLLAAVVFCWTPAHFYNLAIAYRDDYARGDYPMLPVVAGVAATRRRILYWLGATLLVAGALGAVAGFGPVYALTSAVVGFGFLWTVVVQFRTESDRDAYRSFHASNAYLGALLVAILVETMVI.

The tract at residues 1-164 (MQRFTGLVTA…LTKPRLMWLL (164 aa)) is unknown. 13 helical membrane-spanning segments follow: residues 4–24 (FTGLVTATTLATYLLVVLGVA), 35–55 (AVAHYVTAGAVWLLLVAAAAL), 67–87 (WGVTAAAVAYPAQAAVGMAVL), 95–115 (LHLFGGVGVFALLLITLTWHL), 160–180 (LMWLLCLLALSGMALATVTGA), 184–204 (GVTIAATLFGGVLAVGAAGTF), 236–256 (AFGVGLLVVSMAVLVWLVNPL), 257–277 (AAALTAVAVVYYAVVYTVVLK), 282–304 (WNTVIGGGAGALPAVIGWAAVAG), 308–330 (LPALLLAAVVFCWTPAHFYNLAI), 357–377 (ILYWLGATLLVAGALGAVAGF), 378–398 (GPVYALTSAVVGFGFLWTVVV), and 413–433 (HASNAYLGALLVAILVETMVI). Residues 165–430 (CLLALSGMAL…ALLVAILVET (266 aa)) form a protoheme IX prenyltransferase region.

In the C-terminal section; belongs to the UbiA prenyltransferase family. Protoheme IX farnesyltransferase subfamily.

It is found in the cell membrane. It catalyses the reaction heme b + (2E,6E)-farnesyl diphosphate + H2O = Fe(II)-heme o + diphosphate. Its pathway is porphyrin-containing compound metabolism; heme O biosynthesis; heme O from protoheme: step 1/1. In terms of biological role, converts heme B (protoheme IX) to heme O by substitution of the vinyl group on carbon 2 of heme B porphyrin ring with a hydroxyethyl farnesyl side group. The chain is Protoheme IX farnesyltransferase 2 (ctaB2) from Natronomonas pharaonis (strain ATCC 35678 / DSM 2160 / CIP 103997 / JCM 8858 / NBRC 14720 / NCIMB 2260 / Gabara) (Halobacterium pharaonis).